The sequence spans 236 residues: tRNA (guanine-N(7)-)-methyltransferase (236 aa).

S-adenosyl-L-methionine contacts are provided by residues glycine 54, 77 to 78 (EI), 110 to 111 (NA), and leucine 130. The active site involves aspartate 133. 208–210 (TEE) is a binding site for S-adenosyl-L-methionine.

This sequence belongs to the class I-like SAM-binding methyltransferase superfamily. TrmB family.

The protein localises to the nucleus. The enzyme catalyses guanosine(46) in tRNA + S-adenosyl-L-methionine = N(7)-methylguanosine(46) in tRNA + S-adenosyl-L-homocysteine. It participates in tRNA modification; N(7)-methylguanine-tRNA biosynthesis. In terms of biological role, catalyzes the formation of N(7)-methylguanine at position 46 (m7G46) in tRNA. The sequence is that of tRNA (guanine-N(7)-)-methyltransferase from Bombyx mori (Silk moth).